Consider the following 697-residue polypeptide: SITS-binding protein (697 aa).

Residues methionine 1–glycine 20 are disordered. Residues alanine 2 to lysine 29 lie on the Cytoplasmic side of the membrane. A helical transmembrane segment spans residues glycine 30–tryptophan 50. N-linked (GlcNAc...) asparagine glycosylation is found at asparagine 112, asparagine 134, asparagine 162, asparagine 386, asparagine 405, and asparagine 470. A run of 2 helical transmembrane segments spans residues glycine 503 to proline 521 and tryptophan 542 to glycine 562. A glycan (N-linked (GlcNAc...) asparagine) is linked at asparagine 568.

This sequence belongs to the glycosyl hydrolase 31 family. In terms of assembly, homodimer; disulfide-linked. In terms of tissue distribution, electroplax tissue, brain (200-fold less), and heart (500-fold less).

It localises to the membrane. This glycoprotein is probably not a functional part of the chloride channel. In Tetronarce californica (Pacific electric ray), this protein is SITS-binding protein.